A 184-amino-acid polypeptide reads, in one-letter code: uncharacterized protein (184 aa).

Residues 35-55 traverse the membrane as a helical segment; that stretch reads LSFLIYILYTFSISGLSTFVI.

It localises to the membrane. This is an uncharacterized protein from Schizosaccharomyces pombe (strain 972 / ATCC 24843) (Fission yeast).